Consider the following 139-residue polypeptide: ATP synthase epsilon chain (139 aa).

This sequence belongs to the ATPase epsilon chain family. As to quaternary structure, F-type ATPases have 2 components, CF(1) - the catalytic core - and CF(0) - the membrane proton channel. CF(1) has five subunits: alpha(3), beta(3), gamma(1), delta(1), epsilon(1). CF(0) has three main subunits: a, b and c.

The protein resides in the cell membrane. Its function is as follows. Produces ATP from ADP in the presence of a proton gradient across the membrane. This Symbiobacterium thermophilum (strain DSM 24528 / JCM 14929 / IAM 14863 / T) protein is ATP synthase epsilon chain.